Consider the following 420-residue polypeptide: Transmembrane protease serine 11B-like protein (420 aa).

Over 1–19 the chain is Cytoplasmic; that stretch reads MTVSKLRPVIASRKSFPPW. A helical; Signal-anchor for type II membrane protein membrane pass occupies residues 20-40; the sequence is MIILGVLGVLAILGLIIGLLV. Residues 41 to 420 are Extracellular-facing; that stretch reads HFLAVENKIY…RDWIASKTGI (380 aa). Residues 48-165 form the SEA domain; sequence KIYYYQGSFK…GSLKLTEITK (118 aa). Residues asparagine 111 and asparagine 146 are each glycosylated (N-linked (GlcNAc...) asparagine). The 231-residue stretch at 189-419 folds into the Peptidase S1 domain; sequence ITGGSTAQKG…YRDWIASKTG (231 aa). An intrachain disulfide couples cysteine 214 to cysteine 230. Histidine 229 functions as the Charge relay system in the catalytic mechanism. Asparagine 239 carries N-linked (GlcNAc...) asparagine glycosylation. Catalysis depends on aspartate 274, which acts as the Charge relay system. Cystine bridges form between cysteine 339–cysteine 355 and cysteine 366–cysteine 395. Catalysis depends on serine 370, which acts as the Charge relay system.

It belongs to the peptidase S1 family.

Its subcellular location is the membrane. It localises to the cell membrane. With respect to regulation, inhibited by aprotinin, leupeptin, benzamidine, SERPINA1, SPINT1 and SPINT2. Functionally, serine protease. The sequence is that of Transmembrane protease serine 11B-like protein (Tmprss11bnl) from Rattus norvegicus (Rat).